Here is a 320-residue protein sequence, read N- to C-terminus: tRNA U34 carboxymethyltransferase (320 aa).

Carboxy-S-adenosyl-L-methionine-binding positions include lysine 87, tryptophan 101, lysine 106, glycine 126, 148 to 150 (EPS), 176 to 177 (VE), methionine 192, tyrosine 196, and arginine 311.

The protein belongs to the class I-like SAM-binding methyltransferase superfamily. CmoB family. In terms of assembly, homotetramer.

It catalyses the reaction carboxy-S-adenosyl-L-methionine + 5-hydroxyuridine(34) in tRNA = 5-carboxymethoxyuridine(34) in tRNA + S-adenosyl-L-homocysteine + H(+). Catalyzes carboxymethyl transfer from carboxy-S-adenosyl-L-methionine (Cx-SAM) to 5-hydroxyuridine (ho5U) to form 5-carboxymethoxyuridine (cmo5U) at position 34 in tRNAs. This chain is tRNA U34 carboxymethyltransferase, found in Desulfotalea psychrophila (strain LSv54 / DSM 12343).